A 307-amino-acid polypeptide reads, in one-letter code: Glycine--tRNA ligase alpha subunit (307 aa).

Belongs to the class-II aminoacyl-tRNA synthetase family. As to quaternary structure, tetramer of two alpha and two beta subunits.

It localises to the cytoplasm. The catalysed reaction is tRNA(Gly) + glycine + ATP = glycyl-tRNA(Gly) + AMP + diphosphate. The protein is Glycine--tRNA ligase alpha subunit of Levilactobacillus brevis (strain ATCC 367 / BCRC 12310 / CIP 105137 / JCM 1170 / LMG 11437 / NCIMB 947 / NCTC 947) (Lactobacillus brevis).